A 248-amino-acid polypeptide reads, in one-letter code: Probable aquaporin TIP2-2 (248 aa).

2 helical membrane-spanning segments follow: residues 21-41 (AYVA…GSAI) and 55-75 (AGLV…VAIG). An NPA 1 motif is present at residues 84 to 86 (NPA). A run of 3 helical transmembrane segments spans residues 87-109 (VTFG…WIAQ), 133-153 (LSGV…FGLV), and 168-188 (LGTI…LVAG). The NPA 2 motif lies at 196–198 (NPA). The helical transmembrane segment at 210-230 (YTNIWIYWVGPLVGGGLAGLV) threads the bilayer.

Belongs to the MIP/aquaporin (TC 1.A.8) family. TIP (TC 1.A.8.10) subfamily. In terms of tissue distribution, expressed in roots and leaves.

It localises to the vacuole membrane. In terms of biological role, aquaporins facilitate the transport of water and small neutral solutes across cell membranes. May be involved in transport from the vacuolar compartment to the cytoplasm. This is Probable aquaporin TIP2-2 (TIP2-2) from Oryza sativa subsp. japonica (Rice).